A 155-amino-acid polypeptide reads, in one-letter code: RNA-binding protein 3 (155 aa).

The region spanning 6–84 (GKLFVGGLNF…RQIRVDHAGK (79 aa)) is the RRM domain. At R47 the chain carries Omega-N-methylarginine. A disordered region spans residues 79–155 (VDHAGKSARG…GGNYRDNYDN (77 aa)). The residue at position 105 (R105) is an Asymmetric dimethylarginine; alternate. R105 is modified (dimethylated arginine; alternate). Position 105 is an omega-N-methylarginine; alternate (R105). Residues 105-114 (RGGGDQGYGS) are compositionally biased toward gly residues. 2 positions are modified to omega-N-methylarginine: R120 and R130. Residues S135 and S145 each carry the phosphoserine modification. A Phosphotyrosine modification is found at Y153.

As to quaternary structure, interacts with RPL4. Associates with the 60S ribosomal subunits. Arg-105 is dimethylated, probably to asymmetric dimethylarginine. Post-translationally, phosphorylated. Isoform 2 is methylated. As to expression, widely expressed in the brain. Highly expressed in the cerebellum and olfactory bulb (at protein level). Expressed in neurons and glial cells.

It is found in the nucleus. Its subcellular location is the cytoplasm. The protein localises to the cell projection. The protein resides in the dendrite. In terms of biological role, cold-inducible mRNA binding protein that enhances global protein synthesis at both physiological and mild hypothermic temperatures. Reduces the relative abundance of microRNAs, when overexpressed. Enhances phosphorylation of translation initiation factors and active polysome formation. This chain is RNA-binding protein 3 (Rbm3), found in Rattus norvegicus (Rat).